A 447-amino-acid chain; its full sequence is tRNA-2-methylthio-N(6)-dimethylallyladenosine synthase (447 aa).

In terms of domain architecture, MTTase N-terminal spans 1–116; the sequence is MYIRTFGCQM…LPDLIKRRRA (116 aa). [4Fe-4S] cluster-binding residues include Cys8, Cys45, Cys79, Cys153, Cys157, and Cys160. The Radical SAM core domain occupies 139 to 372; that stretch reads RVDGATAFVS…QALINQQAAA (234 aa). Residues 375–438 form the TRAM domain; that stretch reads QGMIGTRQRV…TNSLRGRVAG (64 aa).

Belongs to the methylthiotransferase family. MiaB subfamily. In terms of assembly, monomer. It depends on [4Fe-4S] cluster as a cofactor.

The protein localises to the cytoplasm. The enzyme catalyses N(6)-dimethylallyladenosine(37) in tRNA + (sulfur carrier)-SH + AH2 + 2 S-adenosyl-L-methionine = 2-methylsulfanyl-N(6)-dimethylallyladenosine(37) in tRNA + (sulfur carrier)-H + 5'-deoxyadenosine + L-methionine + A + S-adenosyl-L-homocysteine + 2 H(+). In terms of biological role, catalyzes the methylthiolation of N6-(dimethylallyl)adenosine (i(6)A), leading to the formation of 2-methylthio-N6-(dimethylallyl)adenosine (ms(2)i(6)A) at position 37 in tRNAs that read codons beginning with uridine. The sequence is that of tRNA-2-methylthio-N(6)-dimethylallyladenosine synthase from Bordetella pertussis (strain Tohama I / ATCC BAA-589 / NCTC 13251).